A 55-amino-acid chain; its full sequence is MPQLNPSPWFIILLFSWVIFMVILPNKVMNHLFNNEPALKSTEKSKPDPWNWPWL.

The helical transmembrane segment at 4–24 threads the bilayer; it reads LNPSPWFIILLFSWVIFMVIL.

This sequence belongs to the ATPase protein 8 family. In terms of assembly, component of the ATP synthase complex composed at least of ATP5F1A/subunit alpha, ATP5F1B/subunit beta, ATP5MC1/subunit c (homooctomer), MT-ATP6/subunit a, MT-ATP8/subunit 8, ATP5ME/subunit e, ATP5MF/subunit f, ATP5MG/subunit g, ATP5MK/subunit k, ATP5MJ/subunit j, ATP5F1C/subunit gamma, ATP5F1D/subunit delta, ATP5F1E/subunit epsilon, ATP5PF/subunit F6, ATP5PB/subunit b, ATP5PD/subunit d, ATP5PO/subunit OSCP. ATP synthase complex consists of a soluble F(1) head domain (subunits alpha(3) and beta(3)) - the catalytic core - and a membrane F(0) domain - the membrane proton channel (subunits c, a, 8, e, f, g, k and j). These two domains are linked by a central stalk (subunits gamma, delta, and epsilon) rotating inside the F1 region and a stationary peripheral stalk (subunits F6, b, d, and OSCP).

Its subcellular location is the mitochondrion membrane. Its function is as follows. Subunit 8, of the mitochondrial membrane ATP synthase complex (F(1)F(0) ATP synthase or Complex V) that produces ATP from ADP in the presence of a proton gradient across the membrane which is generated by electron transport complexes of the respiratory chain. ATP synthase complex consist of a soluble F(1) head domain - the catalytic core - and a membrane F(1) domain - the membrane proton channel. These two domains are linked by a central stalk rotating inside the F(1) region and a stationary peripheral stalk. During catalysis, ATP synthesis in the catalytic domain of F(1) is coupled via a rotary mechanism of the central stalk subunits to proton translocation. In vivo, can only synthesize ATP although its ATP hydrolase activity can be activated artificially in vitro. Part of the complex F(0) domain. The protein is ATP synthase F(0) complex subunit 8 of Scyliorhinus canicula (Small-spotted catshark).